A 107-amino-acid chain; its full sequence is U1-lycotoxin-Ls1s (107 aa).

The signal sequence occupies residues 1 to 20 (MMKVLVVVALLVTLISYSSS). A propeptide spanning residues 21–41 (EGIDDLEADELLSLMANEQTR) is cleaved from the precursor. 4 cysteine pairs are disulfide-bonded: C44-C59, C51-C68, C58-C86, and C70-C84.

Belongs to the neurotoxin 19 (CSTX) family. 04 (U1-Lctx) subfamily. Expressed by the venom gland.

It is found in the secreted. In Lycosa singoriensis (Wolf spider), this protein is U1-lycotoxin-Ls1s.